Consider the following 938-residue polypeptide: Isoleucine--tRNA ligase (938 aa).

The short motif at 58–68 (PYANGNIHIGH) is the 'HIGH' region element. L-isoleucyl-5'-AMP is bound at residue glutamate 561. A 'KMSKS' region motif is present at residues 602–606 (KMSKS). Lysine 605 contributes to the ATP binding site. The Zn(2+) site is built by cysteine 901, cysteine 904, cysteine 921, and cysteine 924.

This sequence belongs to the class-I aminoacyl-tRNA synthetase family. IleS type 1 subfamily. Monomer. Requires Zn(2+) as cofactor.

Its subcellular location is the cytoplasm. It catalyses the reaction tRNA(Ile) + L-isoleucine + ATP = L-isoleucyl-tRNA(Ile) + AMP + diphosphate. Its function is as follows. Catalyzes the attachment of isoleucine to tRNA(Ile). As IleRS can inadvertently accommodate and process structurally similar amino acids such as valine, to avoid such errors it has two additional distinct tRNA(Ile)-dependent editing activities. One activity is designated as 'pretransfer' editing and involves the hydrolysis of activated Val-AMP. The other activity is designated 'posttransfer' editing and involves deacylation of mischarged Val-tRNA(Ile). This is Isoleucine--tRNA ligase from Yersinia enterocolitica serotype O:8 / biotype 1B (strain NCTC 13174 / 8081).